The sequence spans 340 residues: Selenide, water dikinase (340 aa).

Cys-13 is an active-site residue. ATP contacts are provided by residues Lys-16 and 43–45; that span reads ASD. Asp-46 contacts Mg(2+). ATP-binding positions include Asp-63, Asp-86, and 133 to 135; that span reads GHS. Residue Asp-86 participates in Mg(2+) binding. Asp-221 provides a ligand contact to Mg(2+).

The protein belongs to the selenophosphate synthase 1 family. Class I subfamily. Homodimer. The cofactor is Mg(2+).

It catalyses the reaction hydrogenselenide + ATP + H2O = selenophosphate + AMP + phosphate + 2 H(+). Synthesizes selenophosphate from selenide and ATP. The sequence is that of Selenide, water dikinase from Desulfitobacterium hafniense (strain Y51).